A 357-amino-acid chain; its full sequence is Cholinesterase 1 (357 aa).

Ser-112 functions as the Acyl-ester intermediate in the catalytic mechanism. Cys-166 and Cys-179 form a disulfide bridge. Active-site charge relay system residues include Glu-244 and His-357.

It belongs to the type-B carboxylesterase/lipase family.

It catalyses the reaction an acylcholine + H2O = a carboxylate + choline + H(+). The polypeptide is Cholinesterase 1 (CHE1) (Branchiostoma lanceolatum (Common lancelet)).